Reading from the N-terminus, the 288-residue chain is MDVTAKYELIGLMAYPIRHSLSPKMQNKALEKAGLPFTYMAFEVDNDSFPGAIEGLKALKMRGTGISMPNKQLACEYVDELTPAAKLVGAINTIVNDDGYLRGYNTDGTGHIRAIKESGFDIKGKTMVLLGAGGASTAIGAQGAIEGLKEIKLFNRRDEFFDKALAFAQRVNENTDCVVTVTDLADQQAFAEALASADILTNGTKVGMKPLENESLVNDISLLHPGLLVTECVYNPHMTKLLQQAQQAGCKTIDGYGMLLWQGAEQFTLWTGKDFPLEYVKQVMGFGA.

Substrate contacts are provided by lysine 71 and aspartate 107. NAD(+) is bound by residues 132 to 135 (AGGA), 155 to 158 (NRRD), lysine 205, 232 to 235 (CVYN), and glycine 255.

This sequence belongs to the shikimate dehydrogenase family. In terms of assembly, homodimer.

The catalysed reaction is L-quinate + NAD(+) = 3-dehydroquinate + NADH + H(+). The enzyme catalyses L-quinate + NADP(+) = 3-dehydroquinate + NADPH + H(+). It carries out the reaction shikimate + NADP(+) = 3-dehydroshikimate + NADPH + H(+). It catalyses the reaction shikimate + NAD(+) = 3-dehydroshikimate + NADH + H(+). The protein operates within metabolic intermediate biosynthesis; chorismate biosynthesis; chorismate from D-erythrose 4-phosphate and phosphoenolpyruvate: step 4/7. The actual biological function of YdiB remains unclear, nor is it known whether 3-dehydroshikimate or quinate represents the natural substrate. Catalyzes the reversible NAD-dependent reduction of both 3-dehydroshikimate (DHSA) and 3-dehydroquinate to yield shikimate (SA) and quinate, respectively. It can use both NAD or NADP for catalysis, however it has higher catalytic efficiency with NAD. This is Quinate/shikimate dehydrogenase from Escherichia coli O139:H28 (strain E24377A / ETEC).